The sequence spans 80 residues: Cytochrome c oxidase subunit 7A1, mitochondrial (80 aa).

The N-terminal 21 residues, 1–21 (MRALRVSQALVRSFSSSTRSH), are a transit peptide targeting the mitochondrion. The Mitochondrial matrix portion of the chain corresponds to 22–46 (LENRVAEKQKLFQADNDLPVHLKGG). The helical transmembrane segment at 47 to 75 (GMDNVLYRLTMTLTLGGTAYCLYCLGWAS) threads the bilayer. The Mitochondrial intermembrane portion of the chain corresponds to 76–80 (FPHKK).

This sequence belongs to the cytochrome c oxidase VIIa family. As to quaternary structure, component of the complex IV (CIV, cytochrome c oxidase), a multisubunit enzyme composed of 14 subunits. The complex is composed of a catalytic core of 3 subunits MT-CO1, MT-CO2 and MT-CO3, encoded in the mitochondrial DNA, and 11 supernumerary subunits COX4I, COX5A, COX5B, COX6A, COX6B, COX6C, COX7A, COX7B, COX7C, COX8 and NDUFA4, which are encoded in the nuclear genome. The complex exists as a monomer or a dimer and forms supercomplexes (SCs) in the inner mitochondrial membrane with NADH-ubiquinone oxidoreductase (complex I, CI) and ubiquinol-cytochrome c oxidoreductase (cytochrome b-c1 complex, complex III, CIII), resulting in different assemblies (supercomplex SCI(1)III(2)IV(1) and megacomplex MCI(2)III(2)IV(2)).

Its subcellular location is the mitochondrion inner membrane. Its pathway is energy metabolism; oxidative phosphorylation. Functionally, component of the mitochondrial respiratory complex IV (CIV, also named cytochrome c oxidase complex), the last enzyme in the mitochondrial electron transport chain which drives oxidative phosphorylation. The CIV complex is the component of the respiratory chain that catalyzes the reduction of oxygen to water. Acts as an assembly factor that specifically drives the homodimerization of CIV complexes, mediating the formation of mitochondrial respiratory supercomplexes (respirasomes) containing two CIV: supercomplxes with two molecules of CIV show improved activity. Despite being highly expressed in brown adipose tissue, not required for thermogenesis. The sequence is that of Cytochrome c oxidase subunit 7A1, mitochondrial from Mus musculus (Mouse).